A 570-amino-acid chain; its full sequence is NADH-ubiquinone oxidoreductase chain 5 (570 aa).

A run of 16 helical transmembrane segments spans residues 2–22 (FSFF…FKHF), 27–47 (GVFL…LSNL), 56–76 (LIAI…VNFS), 77–97 (FYID…GVFV), 109–129 (PHIS…IILV), 134–154 (LVVF…LINF), 179–199 (VLIA…EAIL), 221–241 (LISF…GFHV), 251–271 (VPAS…FLIM), 285–305 (LVTA…AVFQ), 311–330 (ILAY…CSFG), 335–357 (VIVY…GNLI), 380–400 (FFFL…FGFY), 417–437 (AIFC…FNIL), 476–496 (IFLL…FYLL), and 524–544 (LLNY…LVLF).

It belongs to the complex I subunit 5 family.

Its subcellular location is the mitochondrion inner membrane. The enzyme catalyses a ubiquinone + NADH + 5 H(+)(in) = a ubiquinol + NAD(+) + 4 H(+)(out). Its function is as follows. Core subunit of the mitochondrial membrane respiratory chain NADH dehydrogenase (Complex I) that is believed to belong to the minimal assembly required for catalysis. Complex I functions in the transfer of electrons from NADH to the respiratory chain. The immediate electron acceptor for the enzyme is believed to be ubiquinone. The polypeptide is NADH-ubiquinone oxidoreductase chain 5 (ND5) (Paramecium tetraurelia).